A 392-amino-acid polypeptide reads, in one-letter code: [Phe13]-bombesin receptor (392 aa).

At Met-1–Ser-40 the chain is on the extracellular side. N-linked (GlcNAc...) asparagine glycans are attached at residues Asn-9 and Asn-26. A helical transmembrane segment spans residues Pro-41–Leu-62. Topologically, residues Gly-63–Pro-81 are cytoplasmic. A helical membrane pass occupies residues Asn-82–Val-102. The Extracellular portion of the chain corresponds to Asp-103–Lys-120. A disulfide bond links Cys-119 and Cys-202. The chain crosses the membrane as a helical span at residues Ile-121 to Ala-142. Topologically, residues Asp-143–Lys-162 are cytoplasmic. The helical transmembrane segment at Thr-163–Val-183 threads the bilayer. Topologically, residues Phe-184–Ile-219 are extracellular. A helical membrane pass occupies residues Cys-220–Ala-240. Over Lys-241–Thr-271 the chain is Cytoplasmic. A helical transmembrane segment spans residues Val-272–Tyr-292. Residues Arg-293–Ile-312 lie on the Extracellular side of the membrane. Residues Phe-313–Leu-332 traverse the membrane as a helical segment. The Cytoplasmic segment spans residues Ser-333–Glu-392. Residue Cys-346 is the site of S-palmitoyl cysteine attachment.

It belongs to the G-protein coupled receptor 1 family. As to expression, expressed only in brain, primarily in cortex and forebrain and at low levels in the midbrain.

The protein resides in the cell membrane. Its function is as follows. The relative rank potency of bombesin-like peptides for this receptor is [Phe13]bombesin &gt; [Leu13]bombesin &gt; GRP &gt; neuromedin-B. The polypeptide is [Phe13]-bombesin receptor (BB4) (Bombina orientalis (Oriental fire-bellied toad)).